We begin with the raw amino-acid sequence, 188 residues long: Crossover junction endodeoxyribonuclease RuvC (188 aa).

Catalysis depends on residues Asp7, Glu68, and Asp141. 3 residues coordinate Mg(2+): Asp7, Glu68, and Asp141.

The protein belongs to the RuvC family. As to quaternary structure, homodimer which binds Holliday junction (HJ) DNA. The HJ becomes 2-fold symmetrical on binding to RuvC with unstacked arms; it has a different conformation from HJ DNA in complex with RuvA. In the full resolvosome a probable DNA-RuvA(4)-RuvB(12)-RuvC(2) complex forms which resolves the HJ. It depends on Mg(2+) as a cofactor.

It localises to the cytoplasm. It catalyses the reaction Endonucleolytic cleavage at a junction such as a reciprocal single-stranded crossover between two homologous DNA duplexes (Holliday junction).. The RuvA-RuvB-RuvC complex processes Holliday junction (HJ) DNA during genetic recombination and DNA repair. Endonuclease that resolves HJ intermediates. Cleaves cruciform DNA by making single-stranded nicks across the HJ at symmetrical positions within the homologous arms, yielding a 5'-phosphate and a 3'-hydroxyl group; requires a central core of homology in the junction. The consensus cleavage sequence is 5'-(A/T)TT(C/G)-3'. Cleavage occurs on the 3'-side of the TT dinucleotide at the point of strand exchange. HJ branch migration catalyzed by RuvA-RuvB allows RuvC to scan DNA until it finds its consensus sequence, where it cleaves and resolves the cruciform DNA. The sequence is that of Crossover junction endodeoxyribonuclease RuvC from Streptomyces coelicolor (strain ATCC BAA-471 / A3(2) / M145).